Reading from the N-terminus, the 297-residue chain is Bifunctional protein FolD 1 (297 aa).

NADP(+) contacts are provided by residues 164 to 166 (GRS) and Thr230.

This sequence belongs to the tetrahydrofolate dehydrogenase/cyclohydrolase family. Homodimer.

It catalyses the reaction (6R)-5,10-methylene-5,6,7,8-tetrahydrofolate + NADP(+) = (6R)-5,10-methenyltetrahydrofolate + NADPH. The enzyme catalyses (6R)-5,10-methenyltetrahydrofolate + H2O = (6R)-10-formyltetrahydrofolate + H(+). The protein operates within one-carbon metabolism; tetrahydrofolate interconversion. Catalyzes the oxidation of 5,10-methylenetetrahydrofolate to 5,10-methenyltetrahydrofolate and then the hydrolysis of 5,10-methenyltetrahydrofolate to 10-formyltetrahydrofolate. This chain is Bifunctional protein FolD 1, found in Rhodococcus jostii (strain RHA1).